The following is a 199-amino-acid chain: Recombination protein RecR (199 aa).

The segment at 57–72 (CQSCRTFTEQDLCPIC) adopts a C4-type zinc-finger fold. The Toprim domain maps to 81 to 176 (GIICVVETPA…VISRIAHGVP (96 aa)).

It belongs to the RecR family.

Its function is as follows. May play a role in DNA repair. It seems to be involved in an RecBC-independent recombinational process of DNA repair. It may act with RecF and RecO. The chain is Recombination protein RecR from Shewanella frigidimarina (strain NCIMB 400).